Consider the following 433-residue polypeptide: Histidinol dehydrogenase 2 (433 aa).

3 residues coordinate NAD(+): Tyr-130, Gln-192, and Asn-215. Residues Ser-238, Gln-260, and His-263 each coordinate substrate. Zn(2+) is bound by residues Gln-260 and His-263. Residues Glu-328 and His-329 each act as proton acceptor in the active site. 4 residues coordinate substrate: His-329, Asp-362, Glu-416, and His-421. Asp-362 lines the Zn(2+) pocket. His-421 lines the Zn(2+) pocket.

The protein belongs to the histidinol dehydrogenase family. It depends on Zn(2+) as a cofactor.

The catalysed reaction is L-histidinol + 2 NAD(+) + H2O = L-histidine + 2 NADH + 3 H(+). It participates in amino-acid biosynthesis; L-histidine biosynthesis; L-histidine from 5-phospho-alpha-D-ribose 1-diphosphate: step 9/9. Catalyzes the sequential NAD-dependent oxidations of L-histidinol to L-histidinaldehyde and then to L-histidine. This Trichormus variabilis (strain ATCC 29413 / PCC 7937) (Anabaena variabilis) protein is Histidinol dehydrogenase 2.